The sequence spans 738 residues: Squalene hopane cyclase afumA (738 aa).

PFTB repeat units lie at residues 132–173 (GSQY…RIIG) and 321–361 (RRRC…KLHD). Catalysis depends on D460, which acts as the Proton donor. 3 PFTB repeats span residues 482–523 (VRDA…ESLC), 581–621 (CARA…QYFK), and 634–675 (AARA…SQTA).

The protein belongs to the terpene cyclase/mutase family.

Its pathway is secondary metabolite biosynthesis. Functionally, squalene hopane cyclase; part of the gene cluster that mediates the biosynthesis fumihopaside A, a hopane-type glucoside that enhances the thermotolerance and UV resistance of N.fumigata. The first step of fumihopaside A biosynthesis is performed by the squalene hopane cyclase afumA that catalyzes the cyclization of 3S-oxidosqualene into the hopene 21-beta-H-hopane-3-beta,22-diol. The cytochrome P450 monooxygenase afumB is responsible for both hydroxylation at C-24 and oxidations at C-30 of the afumA product. The glycosyltransferase afumC then catalyzes the glycosylation at C-24, using UDP-D-glucose as a donor, to produce fumihopaside A. AfumC is also able to accept UDP-D-galactose and UDP-D-glucuronic acid as donors to yield minor derivatives. Fumihopaside B, another minor derivative produced, is different from fumihopaside A due to the presence of a double bond between C-22 and C-29. The polypeptide is Squalene hopane cyclase afumA (Aspergillus fumigatus (strain CBS 144.89 / FGSC A1163 / CEA10) (Neosartorya fumigata)).